The chain runs to 411 residues: KIN17-like protein (411 aa).

Residues 28 to 50 (CQMCQKQCRDENGFKCHCMSESH) form a C2H2-type zinc finger. Residues 51–160 (QRQMQVFGQN…KERLKNKRVK (110 aa)) are winged helix-turn-helix (wHTH). The stretch at 147–183 (ETLFKERLKNKRVKSDLAEEEKQEREIQRQIERAAEK) forms a coiled coil. Disordered regions lie at residues 182–211 (EKLN…KKDE) and 232–286 (VATG…EEEK). A compositionally biased stretch (basic and acidic residues) spans 253-286 (KVERGEKRKRSGDSGRSEKERRSALDELMKEEEK). Residues 259-262 (KRKR) carry the Nuclear localization signal (NLS) motif. The stretch at 265–294 (DSGRSEKERRSALDELMKEEEKKKERMNRK) forms a coiled coil. Residues 301-352 (GIIVKVMSKALAEKGYYKQKGVVKKVIDNYVGEIKMLDSKHVLRVDQKELET) are C-terminal subdomain A. A C-terminal subdomain B region spans residues 358–409 (GGMVKIVNGAYRGSNARLLGVDTEKFCAKVQIEKGVYDGRVIKSIEYEDICK).

This sequence belongs to the KIN17 family. As to quaternary structure, interacts with SPL7. Expressed in root vasculature, lateral roots, cotyledons, rosette leaves, cauline leaves, stems, sepals, style of pistils, mature pollen grains and siliques.

It is found in the nucleus speckle. In terms of biological role, promotes the copper deficiency response by direct interaction with SPL7. Acts with SPL7 in a common pathway to promote copper-responsive genes and alleviate oxidative stress during copper-limiting periods. May promote SPL7 function when copper is limiting. Participates in the control of general plant growth and development, and in the response to counteract the negative effects of UV radiation. This Arabidopsis thaliana (Mouse-ear cress) protein is KIN17-like protein.